Here is a 363-residue protein sequence, read N- to C-terminus: 3-isopropylmalate dehydrogenase (363 aa).

Position 78-91 (78-91 (GPKWEHLPPAEQPE)) interacts with NAD(+). Substrate-binding residues include arginine 99, arginine 109, arginine 138, and aspartate 227. Positions 227, 251, and 255 each coordinate Mg(2+). Residue 285-297 (GSAPDIAGKNIAN) participates in NAD(+) binding.

This sequence belongs to the isocitrate and isopropylmalate dehydrogenases family. LeuB type 1 subfamily. In terms of assembly, homodimer. Mg(2+) serves as cofactor. Mn(2+) is required as a cofactor.

Its subcellular location is the cytoplasm. It carries out the reaction (2R,3S)-3-isopropylmalate + NAD(+) = 4-methyl-2-oxopentanoate + CO2 + NADH. The protein operates within amino-acid biosynthesis; L-leucine biosynthesis; L-leucine from 3-methyl-2-oxobutanoate: step 3/4. Its function is as follows. Catalyzes the oxidation of 3-carboxy-2-hydroxy-4-methylpentanoate (3-isopropylmalate) to 3-carboxy-4-methyl-2-oxopentanoate. The product decarboxylates to 4-methyl-2 oxopentanoate. This is 3-isopropylmalate dehydrogenase from Yersinia pestis.